Consider the following 1167-residue polypeptide: Cytotoxicity-associated immunodominant antigen (1167 aa).

The disordered stretch occupies residues 632-651 (VAKNLESKSGNKNKMEAKSQ).

Functionally, may be necessary for the transcription, folding, export, or function of the cytotoxin. The chain is Cytotoxicity-associated immunodominant antigen (cagA) from Helicobacter pylori (strain J99 / ATCC 700824) (Campylobacter pylori J99).